The following is a 387-amino-acid chain: Phosphoglycerate kinase (387 aa).

Residues 21-23 (DLN), Arg36, 59-62 (HLGR), Arg113, and Arg146 contribute to the substrate site. ATP is bound by residues Lys197, Glu314, and 340 to 343 (GGDT).

It belongs to the phosphoglycerate kinase family. In terms of assembly, monomer.

It is found in the cytoplasm. It catalyses the reaction (2R)-3-phosphoglycerate + ATP = (2R)-3-phospho-glyceroyl phosphate + ADP. The protein operates within carbohydrate degradation; glycolysis; pyruvate from D-glyceraldehyde 3-phosphate: step 2/5. The polypeptide is Phosphoglycerate kinase (Cronobacter sakazakii (strain ATCC BAA-894) (Enterobacter sakazakii)).